Consider the following 325-residue polypeptide: Pyruvate dehydrogenase E1 component subunit beta (325 aa).

Glutamate 60 serves as a coordination point for thiamine diphosphate.

In terms of assembly, heterodimer of an alpha and a beta chain. Thiamine diphosphate is required as a cofactor.

It carries out the reaction N(6)-[(R)-lipoyl]-L-lysyl-[protein] + pyruvate + H(+) = N(6)-[(R)-S(8)-acetyldihydrolipoyl]-L-lysyl-[protein] + CO2. Functionally, the pyruvate dehydrogenase complex catalyzes the overall conversion of pyruvate to acetyl-CoA and CO(2). It contains multiple copies of three enzymatic components: pyruvate dehydrogenase (E1), dihydrolipoamide acetyltransferase (E2) and lipoamide dehydrogenase (E3). The chain is Pyruvate dehydrogenase E1 component subunit beta (pdhB) from Geobacillus stearothermophilus (Bacillus stearothermophilus).